Reading from the N-terminus, the 268-residue chain is Zinc transporter ZupT (268 aa).

8 helical membrane-spanning segments follow: residues 6-26, 37-57, 73-93, 126-146, 153-173, 189-209, 211-231, and 248-268; these read IIFA…GGVI, FLAG…FVEI, GGNW…AVID, VLTA…TFVA, IAIP…IAVA, WATL…ILLM, FLGP…MVFI, and TAIY…LLFI. Positions 136 and 139 each coordinate Fe(2+). The Zn(2+) site is built by Glu-139 and His-164. Residues Asn-165, Glu-168, and Glu-197 each coordinate Fe(2+). Zn(2+) is bound at residue Glu-168.

This sequence belongs to the ZIP transporter (TC 2.A.5) family. ZupT subfamily.

Its subcellular location is the cell membrane. The enzyme catalyses Zn(2+)(in) = Zn(2+)(out). Functionally, mediates zinc uptake. May also transport other divalent cations. The chain is Zinc transporter ZupT from Corynebacterium efficiens (strain DSM 44549 / YS-314 / AJ 12310 / JCM 11189 / NBRC 100395).